The chain runs to 382 residues: Alkanesulfonate monooxygenase (382 aa).

The protein belongs to the SsuD family.

The enzyme catalyses an alkanesulfonate + FMNH2 + O2 = an aldehyde + FMN + sulfite + H2O + 2 H(+). In terms of biological role, catalyzes the desulfonation of aliphatic sulfonates. The sequence is that of Alkanesulfonate monooxygenase from Pseudomonas sp.